The primary structure comprises 92 residues: DNA/RNA-binding protein Alba (92 aa).

The residue at position 11 (Lys11) is an N6-acetyllysine.

Belongs to the histone-like Alba family. Acetylated. Acetylation at Lys-11 decreases DNA-binding affinity.

Its subcellular location is the cytoplasm. It localises to the chromosome. Binds double-stranded DNA tightly but without sequence specificity. Involved in DNA compaction. This chain is DNA/RNA-binding protein Alba, found in Pyrobaculum islandicum (strain DSM 4184 / JCM 9189 / GEO3).